A 248-amino-acid polypeptide reads, in one-letter code: Probable transcriptional regulatory protein FTF0655 (248 aa).

It belongs to the TACO1 family.

The protein resides in the cytoplasm. This Francisella tularensis subsp. tularensis (strain FSC 198) protein is Probable transcriptional regulatory protein FTF0655.